An 815-amino-acid polypeptide reads, in one-letter code: MTALEHFVAIDRDLLHAAARRACERIAPTWPLDRMIAVSPLWERRDQAWQEVAEQLWRRAGSRLTLDAQAYRQALQEGHLDDRHLQQALDEAGSSWTPAQLLHLLPAQDAEACGLPLLEDMADAEIALPGWPTLITQQIGQCCAAWFDEAQADWRPDRSEGLYQAWRAAMLQDRGLSVLSACAELRQRIGELPMQPQAALEVAVQRLGLAADELDEWFDCLLLRSLGWASWCAYRRWQARLQGDDDDSLRQLLAIRAAWEWLVDDRLRHAGSRWSNWREAWQAARSRVPAAGWQALMLCQRAEELAWQEQLQQGLRRPQAVPAQAPELARVYFCIDVRSEPLRRALEQACPQVRTGGFAGFFGLPIAYTPLGTAATRPQLPGLLAAQLAVSDSSGDSQRDRVLAERRQKRLARKERWQLFERLPASSFTLIESTGLGYAGALLGRTCGLLQGAGAAHRAAWRAAEWRALKPALAPLALTERVQLAARVLRAMSLTRDFPPLILLLGHGSQSANNPQAAGLDCGACCGQSGEVNARLLADLLNDAGVRQGLAEEGIELPDACRVLAGLHNTSTDEVQVFIDALLSAELHSAWQQLRAALDAAGAEVRRQRAARLGLQPVAERPQRLLAALRRRVGDWAQTRPEWGLAGNAGFIAAPRERTRGVDLQGRVFLHDYDWRQDEDGKVLELIMTAPMVVAHWINLQYLTSTTDNRRFGSGNKVLHNVVGGHIGVFEGNGGDLRIGLARQSLHDGERWVHRPLRLSVVLAAPQAMIERVIAAHQVVRDLVEHGWLHLLRLDDDASMPLERRGEAGWQKLAG.

C334, D336, H507, and C522 together coordinate Zn(2+).

Belongs to the inorganic carbon transporter (TC 9.A.2) DabA family. In terms of assembly, forms a complex with DabB. Requires Zn(2+) as cofactor.

The protein localises to the cell inner membrane. Part of an energy-coupled inorganic carbon pump. The polypeptide is Probable inorganic carbon transporter subunit DabA (Ectopseudomonas mendocina (strain ymp) (Pseudomonas mendocina)).